A 270-amino-acid chain; its full sequence is NAD(P)H-hydrate epimerase (270 aa).

The YjeF N-terminal domain occupies 25–234; that stretch reads FQQLMDLMQN…DLLAPEAIYQ (210 aa). 73–77 is a (6S)-NADPHX binding site; sequence DNGGQ. N74 and D144 together coordinate K(+). (6S)-NADPHX is bound by residues 148–154 and E177; that span reads GVGLYGH. Residue T180 participates in K(+) binding.

It belongs to the NnrE/AIBP family. K(+) serves as cofactor.

It catalyses the reaction (6R)-NADHX = (6S)-NADHX. The catalysed reaction is (6R)-NADPHX = (6S)-NADPHX. In terms of biological role, catalyzes the epimerization of the S- and R-forms of NAD(P)HX, a damaged form of NAD(P)H that is a result of enzymatic or heat-dependent hydration. This is a prerequisite for the S-specific NAD(P)H-hydrate dehydratase to allow the repair of both epimers of NAD(P)HX. The polypeptide is NAD(P)H-hydrate epimerase (Legionella pneumophila subsp. pneumophila (strain Philadelphia 1 / ATCC 33152 / DSM 7513)).